A 75-amino-acid chain; its full sequence is Theromacin (75 aa).

Disulfide bonds link cysteine 2-cysteine 9, cysteine 24-cysteine 28, cysteine 31-cysteine 73, cysteine 39-cysteine 47, and cysteine 57-cysteine 59.

The protein belongs to the macin family.

It localises to the secreted. In terms of biological role, has a bactericial activity. This chain is Theromacin, found in Hirudo medicinalis (Medicinal leech).